The sequence spans 444 residues: MSTAPIKHEGFLTKEGGGFKSWKKRWFILKGGDLSYYKTKGELVPLGVIHLNTSGHIKNSDRKKRVNGFEVQTPSRTYFLCSETEEERAKWIEILINERELLLNGGKQPKKSEKVGVADFELLNLVGKGSFGKVIQVRKKDTGEVYAMKVLSKKHIVEHNEVEHTLSERNILQKINHPFLVNLNYSFQTEDKLYFILDYVNGGELFYHLQKDKKFTEDRVRYYGAEIVLALEHLHLSGVIYRDLKPENLLLTNEGHICMTDFGLCKEGLLTPTDKTGTFCGTPEYLAPEVLQGNGYGKQVDWWSFGSLLYEMLTGLPPFYNQDVQEMYRKIMMEKLSFPHFISPDARSLLEQLLERDPEKRLADPNLIKRHPFFRSIDWEQLFQKNIPPPFIPNVKGSADTSQIDPVFTDEAPSLTMAGECALNPQQQKDFEGFTYVAESEHLR.

The PH domain occupies 5–100 (PIKHEGFLTK…WIEILINERE (96 aa)). The Protein kinase domain maps to 120-374 (FELLNLVGKG…PNLIKRHPFF (255 aa)). Residues 126-134 (VGKGSFGKV) and lysine 149 each bind ATP. The active-site Proton acceptor is the aspartate 243. Threonine 278 carries the phosphothreonine modification. The region spanning 375–444 (RSIDWEQLFQ…TYVAESEHLR (70 aa)) is the AGC-kinase C-terminal domain.

It belongs to the protein kinase superfamily. AGC Ser/Thr protein kinase family. RAC subfamily.

The catalysed reaction is L-seryl-[protein] + ATP = O-phospho-L-seryl-[protein] + ADP + H(+). The enzyme catalyses L-threonyl-[protein] + ATP = O-phospho-L-threonyl-[protein] + ADP + H(+). Its function is as follows. Predominantly involved during the aggregation to control cell polarity and chemotaxis. Phosphorylates talB, gefN, gefS, PI4P 5-kinase and gacQ. The polypeptide is RAC family serine/threonine-protein kinase homolog (pkbA) (Dictyostelium discoideum (Social amoeba)).